Consider the following 728-residue polypeptide: Catalase-peroxidase (728 aa).

A disordered region spans residues Met1 to Asp26. Positions Trp96–Tyr218 form a cross-link, tryptophyl-tyrosyl-methioninium (Trp-Tyr) (with M-244). Residue His97 is the Proton acceptor of the active site. Residues Tyr218 to Met244 constitute a cross-link (tryptophyl-tyrosyl-methioninium (Tyr-Met) (with W-96)). His259 is a heme b binding site.

The protein belongs to the peroxidase family. Peroxidase/catalase subfamily. In terms of assembly, homodimer or homotetramer. Heme b is required as a cofactor. Formation of the three residue Trp-Tyr-Met cross-link is important for the catalase, but not the peroxidase activity of the enzyme.

The catalysed reaction is H2O2 + AH2 = A + 2 H2O. It carries out the reaction 2 H2O2 = O2 + 2 H2O. Functionally, bifunctional enzyme with both catalase and broad-spectrum peroxidase activity. Important for stationary phase survival. The chain is Catalase-peroxidase from Rhizobium etli (strain ATCC 51251 / DSM 11541 / JCM 21823 / NBRC 15573 / CFN 42).